The sequence spans 118 residues: Autophagy-related protein 8D (118 aa).

The Phosphatidylethanolamine amidated glycine moiety is linked to residue Gly-118.

Belongs to the ATG8 family. Interacts with ATG4. In terms of processing, the C-terminal Gly is amidated with phosphatidylethanolamine by an activating system similar to that for ubiquitin.

The protein resides in the cytoplasmic vesicle. It localises to the autophagosome membrane. Its subcellular location is the vacuole membrane. The protein localises to the cytoplasm. It is found in the cytoskeleton. Its function is as follows. Ubiquitin-like modifier involved in autophagosomes formation. May mediate the delivery of the autophagosomes to the vacuole via the microtubule cytoskeleton. This Oryza sativa subsp. japonica (Rice) protein is Autophagy-related protein 8D (ATG8D).